The following is a 366-amino-acid chain: Chorismate synthase (366 aa).

Arginine 48 and arginine 54 together coordinate NADP(+). FMN contacts are provided by residues 129–131 (RSS), 241–242 (NA), glycine 290, 305–309 (KPTSS), and arginine 331.

Belongs to the chorismate synthase family. Homotetramer. It depends on FMNH2 as a cofactor.

The enzyme catalyses 5-O-(1-carboxyvinyl)-3-phosphoshikimate = chorismate + phosphate. The protein operates within metabolic intermediate biosynthesis; chorismate biosynthesis; chorismate from D-erythrose 4-phosphate and phosphoenolpyruvate: step 7/7. Catalyzes the anti-1,4-elimination of the C-3 phosphate and the C-6 proR hydrogen from 5-enolpyruvylshikimate-3-phosphate (EPSP) to yield chorismate, which is the branch point compound that serves as the starting substrate for the three terminal pathways of aromatic amino acid biosynthesis. This reaction introduces a second double bond into the aromatic ring system. The sequence is that of Chorismate synthase from Nitrobacter hamburgensis (strain DSM 10229 / NCIMB 13809 / X14).